Here is a 278-residue protein sequence, read N- to C-terminus: Aliphatic sulfonates import ATP-binding protein SsuB (278 aa).

In terms of domain architecture, ABC transporter spans Leu15–Leu236. Gly47–Ser54 is a binding site for ATP. Positions Pro251 to Pro264 are enriched in basic and acidic residues. The interval Pro251–Val278 is disordered.

The protein belongs to the ABC transporter superfamily. Aliphatic sulfonates importer (TC 3.A.1.17.2) family. As to quaternary structure, the complex is composed of two ATP-binding proteins (SsuB), two transmembrane proteins (SsuC) and a solute-binding protein (SsuA).

It is found in the cell inner membrane. It catalyses the reaction ATP + H2O + aliphatic sulfonate-[sulfonate-binding protein]Side 1 = ADP + phosphate + aliphatic sulfonateSide 2 + [sulfonate-binding protein]Side 1.. Part of the ABC transporter complex SsuABC involved in aliphatic sulfonates import. Responsible for energy coupling to the transport system. The protein is Aliphatic sulfonates import ATP-binding protein SsuB of Albidiferax ferrireducens (strain ATCC BAA-621 / DSM 15236 / T118) (Rhodoferax ferrireducens).